The primary structure comprises 126 residues: Protein ApaG (126 aa).

Residues 2–126 (DVIQPCIKIQ…FRLAIPNVLN (125 aa)) enclose the ApaG domain.

The chain is Protein ApaG from Vibrio campbellii (strain ATCC BAA-1116).